We begin with the raw amino-acid sequence, 271 residues long: Ferric enterobactin transport ATP-binding protein FepC (271 aa).

In terms of domain architecture, ABC transporter spans Leu8–Arg244. Gly40–Ser47 contacts ATP.

The protein belongs to the ABC transporter superfamily. In terms of assembly, the complex is composed of two ATP-binding proteins (FepC), two transmembrane proteins (FepD and FepG) and a solute-binding protein (FepB).

The protein resides in the cell inner membrane. It carries out the reaction Fe(III)-enterobactin(out) + ATP + H2O = Fe(III)-enterobactin(in) + ADP + phosphate + H(+). Its function is as follows. Part of the ABC transporter complex FepBDGC involved in ferric enterobactin uptake. Responsible for energy coupling to the transport system. The chain is Ferric enterobactin transport ATP-binding protein FepC (fepC) from Escherichia coli (strain K12).